Consider the following 252-residue polypeptide: Phosphoglycolate phosphatase (252 aa).

Aspartate 13 acts as the Nucleophile in catalysis. Mg(2+)-binding residues include aspartate 13, aspartate 15, and aspartate 192.

This sequence belongs to the HAD-like hydrolase superfamily. CbbY/CbbZ/Gph/YieH family. As to quaternary structure, monomer. It depends on Mg(2+) as a cofactor. Chloride serves as cofactor.

It carries out the reaction 2-phosphoglycolate + H2O = glycolate + phosphate. It functions in the pathway organic acid metabolism; glycolate biosynthesis; glycolate from 2-phosphoglycolate: step 1/1. In terms of biological role, specifically catalyzes the dephosphorylation of 2-phosphoglycolate. Is involved in the dissimilation of the intracellular 2-phosphoglycolate formed during the DNA repair of 3'-phosphoglycolate ends, a major class of DNA lesions induced by oxidative stress. This chain is Phosphoglycolate phosphatase, found in Salmonella typhimurium (strain LT2 / SGSC1412 / ATCC 700720).